The sequence spans 293 residues: ATP synthase gamma chain (293 aa).

Belongs to the ATPase gamma chain family. F-type ATPases have 2 components, CF(1) - the catalytic core - and CF(0) - the membrane proton channel. CF(1) has five subunits: alpha(3), beta(3), gamma(1), delta(1), epsilon(1). CF(0) has three main subunits: a, b and c.

The protein resides in the cell inner membrane. Produces ATP from ADP in the presence of a proton gradient across the membrane. The gamma chain is believed to be important in regulating ATPase activity and the flow of protons through the CF(0) complex. This is ATP synthase gamma chain from Psychrobacter cryohalolentis (strain ATCC BAA-1226 / DSM 17306 / VKM B-2378 / K5).